Consider the following 472-residue polypeptide: Nuclear hormone receptor family member nhr-2 (472 aa).

4 stretches are compositionally biased toward polar residues: residues 57 to 83, 90 to 112, 138 to 147, and 159 to 171; these read TATN…LSQI, NDTI…HNQP, LSSTQSSPDN, and VRRN…SAST. Disordered stretches follow at residues 57–112 and 138–184; these read TATN…HNQP and LSST…RTNT. The segment at residues 215-297 is a DNA-binding region (nuclear receptor); that stretch reads KDRCMVCGDN…VGMNRDNVRV (83 aa). 2 NR C4-type zinc fingers span residues 218–238 and 267–285; these read CMVC…CEGC and CAAN…FAKC.

It belongs to the nuclear hormone receptor family.

It localises to the nucleus. Functionally, orphan nuclear receptor. The polypeptide is Nuclear hormone receptor family member nhr-2 (nhr-2) (Caenorhabditis elegans).